The sequence spans 101 residues: Urease subunit beta (101 aa).

Belongs to the urease beta subunit family. As to quaternary structure, heterotrimer of UreA (gamma), UreB (beta) and UreC (alpha) subunits. Three heterotrimers associate to form the active enzyme.

It localises to the cytoplasm. It carries out the reaction urea + 2 H2O + H(+) = hydrogencarbonate + 2 NH4(+). Its pathway is nitrogen metabolism; urea degradation; CO(2) and NH(3) from urea (urease route): step 1/1. The sequence is that of Urease subunit beta from Sinorhizobium medicae (strain WSM419) (Ensifer medicae).